The primary structure comprises 861 residues: MQKSLVIVESPAKAKTINQYLGSEYIVKSSIGHIRDLTKGKLYNKEKNKKFLNENFIEKTNENKILIKQMGIDPYQNWKFEYHILPGKEKIISELKYIANQVKHIYLATDLDREGEAIAWHLKEVIGGDSSKFSRVVFNEITQHSIQKAFKNVGHINMNRVHAQQARRFMDRIVGYMISPLLWKKIARGLSAGRVQSVAVRIIADRESIIKNFVPEEYWKLDVSLISQDKKKINMDVTHYNNKKFRPINENEVSFAVEKIQKSSCIVKNYEEKISYLKAPAPFITSTLQQSASLRLGFSVKKTMFLAQKLYEEGYITYMRTDSNYLSEYAIKKVRKYIKSNYGSNYLPKEPNIYSNEKHSQEAHEAIRPSDIKIKNIDSDHLNSSAKKLYELIWNQFLASQMKSVKYKSITVTVLADMFKLQKSERIVMFQGWNKVLIEEKNVFSQFPILQTGSQLFINKVTPSQKFTKPPPRFSEASLVRELEKKGIGRPSTYSAITSKIQDRGYVKIKKNKFYAEKMGEILTIRLKKSFSNLIDYNFTAHMEKKLDQVAENKVTWRYLLDDFFKKFSEQLEQAKKSPEEGGMELNNIVPTSLNCPICCKKMGIKTAITGVFLSCLGYNNTDNKKRCKKTINLITLNDFNKEQDNQKKISLQLIQKCDICNMYMDSYFINEKLKLHICANNPSCSGYKFEKGVFKSPIYLSKTIQCEKCYNNMKLKIGPFGKFFTCINKICKNTRKILPNGEISDPKLEPIPFPELLCKQSDAWFVLREGISGIFFAANTFPKSRETRSPFVEELVRFQHLLPEKIYYLSSAPVIDNYGNKTIVCFDKKKKTHYIASKKDGKFTGWSAVFIDQKWCVINK.

In terms of domain architecture, Toprim spans K3–I141. The Mg(2+) site is built by E9 and D110. The 416-residue stretch at N157–L572 folds into the Topo IA-type catalytic domain. Positions S191 to Q196 are interaction with DNA. Catalysis depends on Y318, which acts as the O-(5'-phospho-DNA)-tyrosine intermediate. C4-type zinc fingers lie at residues C596–C628, C658–C685, and C707–C732.

It belongs to the type IA topoisomerase family. As to quaternary structure, monomer. It depends on Mg(2+) as a cofactor.

It catalyses the reaction ATP-independent breakage of single-stranded DNA, followed by passage and rejoining.. Releases the supercoiling and torsional tension of DNA, which is introduced during the DNA replication and transcription, by transiently cleaving and rejoining one strand of the DNA duplex. Introduces a single-strand break via transesterification at a target site in duplex DNA. The scissile phosphodiester is attacked by the catalytic tyrosine of the enzyme, resulting in the formation of a DNA-(5'-phosphotyrosyl)-enzyme intermediate and the expulsion of a 3'-OH DNA strand. The free DNA strand then undergoes passage around the unbroken strand, thus removing DNA supercoils. Finally, in the religation step, the DNA 3'-OH attacks the covalent intermediate to expel the active-site tyrosine and restore the DNA phosphodiester backbone. The sequence is that of DNA topoisomerase 1 from Buchnera aphidicola subsp. Acyrthosiphon pisum (strain APS) (Acyrthosiphon pisum symbiotic bacterium).